Consider the following 209-residue polypeptide: Ribosomal RNA large subunit methyltransferase E (209 aa).

S-adenosyl-L-methionine is bound by residues Gly-63, Trp-65, Asp-83, Asp-99, and Asp-124. Catalysis depends on Lys-164, which acts as the Proton acceptor.

This sequence belongs to the class I-like SAM-binding methyltransferase superfamily. RNA methyltransferase RlmE family.

Its subcellular location is the cytoplasm. The catalysed reaction is uridine(2552) in 23S rRNA + S-adenosyl-L-methionine = 2'-O-methyluridine(2552) in 23S rRNA + S-adenosyl-L-homocysteine + H(+). In terms of biological role, specifically methylates the uridine in position 2552 of 23S rRNA at the 2'-O position of the ribose in the fully assembled 50S ribosomal subunit. This chain is Ribosomal RNA large subunit methyltransferase E, found in Escherichia coli O81 (strain ED1a).